The following is a 98-amino-acid chain: UPF0358 protein LCA_1078 (98 aa).

It belongs to the UPF0358 family.

This chain is UPF0358 protein LCA_1078, found in Latilactobacillus sakei subsp. sakei (strain 23K) (Lactobacillus sakei subsp. sakei).